A 283-amino-acid chain; its full sequence is MLGVRALFGIGLLVTSRGGFVLTHTRACSSAASNIYSKHLTHRPTCTMANTGVKYLGQEEAQQIDEELFSDFSFSVDQLMELAGLSCATAVAKGYPVTSLLKSPARVLVICGPGNNGGDGLVCARHLKLFGYEPSVLYPKRPNKQLFQNLSIQCQKMEIPFLTEMPEADLIDEAYSLVVDAIFGFSFKGAVREPFGEILSQLKKITVPIASVDIPSGWDVEKGCPDGIQPDMLISLTAPKKSAALFKGRFHFLGGRFVPPVLEQKYQLNLPQYPGTECVFQLN.

The transit peptide at 1–28 (MLGVRALFGIGLLVTSRGGFVLTHTRAC) directs the protein to the mitochondrion. Positions 61–270 (AQQIDEELFS…VLEQKYQLNL (210 aa)) constitute a YjeF N-terminal domain. 115–119 (NNGGD) serves as a coordination point for (6S)-NADPHX. K(+) is bound by residues asparagine 116 and aspartate 180. (6S)-NADPHX contacts are provided by residues 184–190 (GFSFKGA) and aspartate 213. Serine 216 lines the K(+) pocket.

It belongs to the NnrE/AIBP family. As to quaternary structure, homodimer. Interacts with apoa1a. Binds to high-density lipoprotein. It depends on K(+) as a cofactor.

The protein localises to the mitochondrion. The protein resides in the secreted. The enzyme catalyses (6R)-NADHX = (6S)-NADHX. It catalyses the reaction (6R)-NADPHX = (6S)-NADPHX. Its function is as follows. Catalyzes the epimerization of the S- and R-forms of NAD(P)HX, a damaged form of NAD(P)H that is a result of enzymatic or heat-dependent hydration. This is a prerequisite for the S-specific NAD(P)H-hydrate dehydratase to allow the repair of both epimers of NAD(P)HX. The protein is NAD(P)H-hydrate epimerase of Danio rerio (Zebrafish).